Reading from the N-terminus, the 387-residue chain is Cysteine desulfurase (387 aa).

Residues 72–73 (GT), asparagine 152, glutamine 180, and 200–202 (SAH) each bind pyridoxal 5'-phosphate. Residue lysine 203 is modified to N6-(pyridoxal phosphate)lysine. Threonine 238 contributes to the pyridoxal 5'-phosphate binding site. Cysteine 326 acts as the Cysteine persulfide intermediate in catalysis. Cysteine 326 serves as a coordination point for [2Fe-2S] cluster.

It belongs to the class-V pyridoxal-phosphate-dependent aminotransferase family. NifS/IscS subfamily. As to quaternary structure, homodimer. Requires pyridoxal 5'-phosphate as cofactor.

It catalyses the reaction (sulfur carrier)-H + L-cysteine = (sulfur carrier)-SH + L-alanine. Catalyzes the removal of elemental sulfur atoms from cysteine to produce alanine. Seems to participate in the biosynthesis of the nitrogenase metalloclusters by providing the inorganic sulfur required for the Fe-S core formation. This Sinorhizobium fredii (strain NBRC 101917 / NGR234) protein is Cysteine desulfurase.